We begin with the raw amino-acid sequence, 330 residues long: Ferredoxin--NADP reductase (330 aa).

7 residues coordinate FAD: glutamate 35, glutamine 43, tyrosine 48, valine 90, phenylalanine 123, aspartate 285, and threonine 326.

This sequence belongs to the ferredoxin--NADP reductase type 2 family. As to quaternary structure, homodimer. FAD serves as cofactor.

The enzyme catalyses 2 reduced [2Fe-2S]-[ferredoxin] + NADP(+) + H(+) = 2 oxidized [2Fe-2S]-[ferredoxin] + NADPH. The sequence is that of Ferredoxin--NADP reductase from Streptococcus pyogenes serotype M2 (strain MGAS10270).